Here is a 5571-residue protein sequence, read N- to C-terminus: Polyketide synthase GfsB (5571 aa).

The interval 1 to 27 is disordered; it reads MSVPPPGATPSRTSRTKGLKDRPRMEN. Basic and acidic residues predominate over residues 18–27; sequence GLKDRPRMEN. The 427-residue stretch at 57–483 folds into the Ketosynthase family 3 (KS3) 1 domain; the sequence is QEPVAIIGMS…GTNAHVIIEQ (427 aa). 3 module regions span residues 57 to 2148, 2167 to 3728, and 3746 to 5485; these read QEPV…RDTL, DEPL…GSQV, and DEPV…HTHL. Residues Cys-230, His-365, and His-405 each act as for beta-ketoacyl synthase 1 activity in the active site. The disordered stretch occupies residues 485-518; that stretch reads PAIEGTGLGDDAPPTAEHPEERTPADGGPAPQPV. Positions 611–926 constitute a Malonyl-CoA:ACP transacylase (MAT) 1 domain; it reads FVFPGQGSQW…LRSLAEAYAH (316 aa). Positions 976-1109 are N-terminal hotdog fold 1; it reads HPLLAAATSL…GYLAVGAHEP (134 aa). In terms of domain architecture, PKS/mFAS DH 1 spans 976 to 1264; sequence HPLLAAATSL…LRPLATNQAP (289 aa). The active-site Proton acceptor; for dehydratase activity 1 is His-1008. Residues 1122 to 1264 form a C-terminal hotdog fold 1 region; it reads ATPLDVTDLY…LRPLATNQAP (143 aa). The active-site Proton donor; for dehydratase activity 1 is Asp-1183. The 300-residue stretch at 1478-1777 folds into the Enoyl reductase (ER) domain; the sequence is GTLDHLTLIP…QARHIGKIVL (300 aa). The Ketoreductase (KR) 1 domain maps to 1787 to 1966; the sequence is GTVLVTGATG…TSLAWGLWEE (180 aa). The Carrier 1 domain maps to 2073-2148; the sequence is RIVNDLVRDH…ELAAHLRDTL (76 aa). Position 2108 is an O-(pantetheine 4'-phosphoryl)serine (Ser-2108). The region spanning 2167-2593 is the Ketosynthase family 3 (KS3) 2 domain; it reads DEPLAVVAMS…GTNAHVILEQ (427 aa). Active-site for beta-ketoacyl synthase 2 activity residues include Cys-2340, His-2475, and His-2515. Residues 2710–3016 form the Malonyl-CoA:ACP transacylase (MAT) 2 domain; sequence VFSGQGSQRP…AAVALQRGNR (307 aa). The region spanning 3373–3551 is the Ketoreductase (KR) 2 domain; that stretch reads GTVLVTGGTG…VSVAWGPWAE (179 aa). The Carrier 2 domain occupies 3653 to 3728; sequence TALLDLVRGQ…ALAEYVGSQV (76 aa). Ser-3688 is modified (O-(pantetheine 4'-phosphoryl)serine). One can recognise a Ketosynthase family 3 (KS3) 3 domain in the interval 3746-4172; sequence DEPVAIIGMS…GTNAHVILEQ (427 aa). Catalysis depends on for beta-ketoacyl synthase 3 activity residues Cys-3919, His-4054, and His-4094. In terms of domain architecture, Malonyl-CoA:ACP transacylase (MAT) 3 spans 4279-4601; that stretch reads FLFSGQGSQR…ATAHVNGVQP (323 aa). The N-terminal hotdog fold 2 stretch occupies residues 4649 to 4774; that stretch reads HPLLAGVVDL…GALTVAEAVD (126 aa). The 283-residue stretch at 4649–4931 folds into the PKS/mFAS DH 2 domain; sequence HPLLAGVVDL…TRPIAAGQLA (283 aa). Residue His-4681 is the Proton acceptor; for dehydratase activity 2 of the active site. The tract at residues 4787–4931 is C-terminal hotdog fold 2; the sequence is AIEVELDDPY…TRPIAAGQLA (145 aa). The active-site Proton donor; for dehydratase activity 2 is Asp-4848. The Ketoreductase (KR) 3 domain maps to 5134 to 5306; sequence LLVTGASGVL…TSLSWGLWAE (173 aa). A Carrier 3 domain is found at 5410 to 5485; that stretch reads RMVLDLVRDR…ALARYLHTHL (76 aa). Ser-5445 carries the O-(pantetheine 4'-phosphoryl)serine modification.

It depends on pantetheine 4'-phosphate as a cofactor.

It functions in the pathway antibiotic biosynthesis. Its function is as follows. Second protein in the synthesis of the 16-membered macrolide antibiotics FD-891 and FD-892. Composed of 3 modules. Modifies the product of GfsA by multiple rounds of addition of malonyl-CoA or methylmalonyl-CoA and other modifications to help generate the final products. The sequence is that of Polyketide synthase GfsB from Streptomyces halstedii.